The primary structure comprises 179 residues: MTRLENMYKKEVVPALIKRFGYSNPMAVPRLVKITLNMGVGEAATNKKVLENAVADMAKISGQRPIVTKSRISVASFKIRNGWPIGCKTTLRRSKMYEFLDRLINISLPCVRDFRGIPPRSFDGRGNFNMGVKEQVVFPEIDFDAVDAIRGMDIAITTTANSDAEAKALLDAFNFPFRN.

This sequence belongs to the universal ribosomal protein uL5 family. As to quaternary structure, part of the 50S ribosomal subunit; part of the 5S rRNA/L5/L18/L25 subcomplex. Contacts the 5S rRNA and the P site tRNA. Forms a bridge to the 30S subunit in the 70S ribosome.

Its function is as follows. This is one of the proteins that bind and probably mediate the attachment of the 5S RNA into the large ribosomal subunit, where it forms part of the central protuberance. In the 70S ribosome it contacts protein S13 of the 30S subunit (bridge B1b), connecting the 2 subunits; this bridge is implicated in subunit movement. Contacts the P site tRNA; the 5S rRNA and some of its associated proteins might help stabilize positioning of ribosome-bound tRNAs. The protein is Large ribosomal subunit protein uL5 of Xylella fastidiosa (strain 9a5c).